A 773-amino-acid chain; its full sequence is Mitochondrial inner membrane m-AAA protease component yta12 (773 aa).

Positions 83–119 (FSVTSKRSQNGSSGSNSDANGRKNGQKNDDSKKKGLN) are disordered. The span at 87-101 (SKRSQNGSSGSNSDA) shows a compositional bias: low complexity. 2 helical membrane-spanning segments follow: residues 126-146 (VFEIALNGNTILGGILVAYIL) and 239-259 (VLATLLSFAPTLLIIGSVIYL). 8 residues coordinate ATP: Val-298, Ala-299, Thr-340, Gly-341, Lys-342, Thr-343, Leu-344, and His-479. A Zn(2+)-binding site is contributed by His-561. The active site involves Glu-562. Zn(2+) is bound by residues His-565 and Asp-638. The disordered stretch occupies residues 752 to 773 (EYKNDHDPRNPPIPPSPQQPSA). The span at 761–773 (NPPIPPSPQQPSA) shows a compositional bias: pro residues.

It in the N-terminal section; belongs to the AAA ATPase family. This sequence in the C-terminal section; belongs to the peptidase M41 family. Component of the m-AAA protease complex. The cofactor is Zn(2+).

The protein resides in the mitochondrion membrane. It catalyses the reaction ATP + H2O = ADP + phosphate + H(+). In terms of biological role, catalytic component of the m-AAA protease, a protease that plays a key role in proteostasis of inner mitochondrial membrane proteins. Possesses both ATPase and protease activities: the ATPase activity is required to unfold substrates, threading them into the internal proteolytic cavity for hydrolysis into small peptide fragments. The complex is necessary for the assembly of mitochondrial respiratory chain and ATPase complexes. The m-AAA protease carries out protein quality control in the inner membrane of the mitochondria by mediating degradation of mistranslated or misfolded polypeptides. It also mediates protein maturation of the mitochondrial ribosomal subunit mrpl32/bL32m by catalyzing the cleavage of the presequence of mrpl32/bL32m prior to assembly into the mitochondrial ribosome. Also acts as a membrane protein dislocase: required to dislocate moderately hydrophobic transmembrane segments from the membrane. This is Mitochondrial inner membrane m-AAA protease component yta12 (yta12) from Schizosaccharomyces pombe (strain 972 / ATCC 24843) (Fission yeast).